The following is a 447-amino-acid chain: Putative branched-chain amino acid carrier protein SAUSA300_1300 (447 aa).

The next 12 helical transmembrane spans lie at 6–26 (WVIGFTLFAMFFGAGNLIFPP), 40–60 (ILAFVLTGIGLPLLGVIVGAL), 74–94 (PKFSILFLIIIYLTIGPLFAI), 114–134 (SSIALFIFTIIYFIVVLYICL), 143–163 (IGSLLTPLLLITILAMIIKGY), 193–213 (GYLTMDAIAAIAFSMIVVNAV), 229–249 (LTAGLIAAVALIFIYISLGYI), 290–310 (LLGIIVALACLTTACGLIVAV), 326–346 (FVLVFILMSFIIANQGLNAVI), 350–370 (IPVLSIVYPVAITVVLLILIA), 382–402 (IPVIIVFILSIFSVISKLGWL), and 417–437 (LEWFPVAIIATILGYLVGIFV).

It belongs to the branched chain amino acid transporter family.

Its subcellular location is the cell membrane. Component of the transport system for branched-chain amino acids (leucine, isoleucine and valine), which is coupled to a proton motive force (Potential). Contributes to NaCl tolerance. The sequence is that of Putative branched-chain amino acid carrier protein SAUSA300_1300 from Staphylococcus aureus (strain USA300).